A 100-amino-acid polypeptide reads, in one-letter code: Urease subunit gamma (100 aa).

Belongs to the urease gamma subunit family. In terms of assembly, heterotrimer of UreA (gamma), UreB (beta) and UreC (alpha) subunits. Three heterotrimers associate to form the active enzyme.

It localises to the cytoplasm. The enzyme catalyses urea + 2 H2O + H(+) = hydrogencarbonate + 2 NH4(+). It functions in the pathway nitrogen metabolism; urea degradation; CO(2) and NH(3) from urea (urease route): step 1/1. In Dinoroseobacter shibae (strain DSM 16493 / NCIMB 14021 / DFL 12), this protein is Urease subunit gamma.